The sequence spans 725 residues: Protein ECM27 (725 aa).

12 consecutive transmembrane segments (helical) span residues 21 to 41 (VTFI…LGIC), 119 to 139 (VLGA…IIMS), 157 to 177 (LLFS…NQVT), 178 to 198 (VLNC…KLTF), 397 to 417 (ISDA…KLSC), 439 to 459 (LPII…CSIL), 470 to 490 (LVYL…TAFI), 526 to 546 (IQII…SLLA), 559 to 579 (ILGL…NSVG), 621 to 641 (LNSM…IGAF), 668 to 688 (FIVS…FFGG), and 704 to 724 (GISM…LELF).

Belongs to the Ca(2+):cation antiporter (CaCA) (TC 2.A.19) family.

The protein localises to the membrane. In Saccharomyces cerevisiae (strain ATCC 204508 / S288c) (Baker's yeast), this protein is Protein ECM27 (ECM27).